The sequence spans 372 residues: MTLTVTVSLLSSPLHSVCTSAGARFTGFAGWELPLQFQGLMQEHLAVRERAGLFDISHMGKFQLRGSGLRAALQRLLPSDLTTLLPGQAQYSVLLNEAGGCLDDLIVYWQGIVDGVEQAFLIVNAATTDSDRLWLTEHLPPAIALLDLSQDLALVAIQGPQAIAFLQPLVSCDLAELPRFSHTVTSIAGQPAFVARTGYTGEDGCEVMLPPAAAITLWQQLTAAGVVPCGLGARDTLRLEAAMPLYGHELDTDTNPLEAGLGWVVHLDRNPDFLGRDRLVQAKTNGLERRLVGLELPGRNIARHGYPVAIADTTVGIVTSGSWSPTLSKAIALAYVPPALANLGQELWVEIRGKQVPATVVKRPFYRGSQFR.

This sequence belongs to the GcvT family. In terms of assembly, the glycine cleavage system is composed of four proteins: P, T, L and H.

It carries out the reaction N(6)-[(R)-S(8)-aminomethyldihydrolipoyl]-L-lysyl-[protein] + (6S)-5,6,7,8-tetrahydrofolate = N(6)-[(R)-dihydrolipoyl]-L-lysyl-[protein] + (6R)-5,10-methylene-5,6,7,8-tetrahydrofolate + NH4(+). Its function is as follows. The glycine cleavage system catalyzes the degradation of glycine. This chain is Aminomethyltransferase, found in Synechococcus elongatus (strain ATCC 33912 / PCC 7942 / FACHB-805) (Anacystis nidulans R2).